A 362-amino-acid polypeptide reads, in one-letter code: Protein MGF 360-19R (362 aa).

One copy of the ANK repeat lies at leucine 66–isoleucine 98.

It belongs to the asfivirus MGF 360 family.

Plays a role in virus cell tropism, and may be required for efficient virus replication in macrophages. The chain is Protein MGF 360-19R from Ornithodoros (relapsing fever ticks).